A 491-amino-acid polypeptide reads, in one-letter code: Aspartyl/glutamyl-tRNA(Asn/Gln) amidotransferase subunit B (491 aa).

The protein belongs to the GatB/GatE family. GatB subfamily. Heterotrimer of A, B and C subunits.

It carries out the reaction L-glutamyl-tRNA(Gln) + L-glutamine + ATP + H2O = L-glutaminyl-tRNA(Gln) + L-glutamate + ADP + phosphate + H(+). The catalysed reaction is L-aspartyl-tRNA(Asn) + L-glutamine + ATP + H2O = L-asparaginyl-tRNA(Asn) + L-glutamate + ADP + phosphate + 2 H(+). Allows the formation of correctly charged Asn-tRNA(Asn) or Gln-tRNA(Gln) through the transamidation of misacylated Asp-tRNA(Asn) or Glu-tRNA(Gln) in organisms which lack either or both of asparaginyl-tRNA or glutaminyl-tRNA synthetases. The reaction takes place in the presence of glutamine and ATP through an activated phospho-Asp-tRNA(Asn) or phospho-Glu-tRNA(Gln). The polypeptide is Aspartyl/glutamyl-tRNA(Asn/Gln) amidotransferase subunit B (Nostoc punctiforme (strain ATCC 29133 / PCC 73102)).